We begin with the raw amino-acid sequence, 134 residues long: Proline-rich protein 4 (134 aa).

The first 16 residues, Met-1–Ala-16, serve as a signal peptide directing secretion. The interval Phe-28–Trp-134 is disordered. Pro residues predominate over residues Gln-47 to Pro-59. Polar residues predominate over residues Val-110–Phe-119. The span at Gln-120–Trp-134 shows a compositional bias: basic and acidic residues.

Abundantly expressed in lacrimal gland where it is found in the acinar cells but not in the intralobular ducts. Also found in the submandibular gland, the parotid and sublingual glands.

The protein localises to the secreted. This Homo sapiens (Human) protein is Proline-rich protein 4 (PRR4).